Here is a 540-residue protein sequence, read N- to C-terminus: Amino acid transporter AVT1B (540 aa).

Residues 1–11 (MNHSTSDQSLY) show a composition bias toward polar residues. Positions 1–55 (MNHSTSDQSLYIESDDGDDERKHLSDDEDDDGTLSDTSDAYNQNQHHLSKASPYS) are disordered. Transmembrane regions (helical) follow at residues 155–175 (AVLNGVNVLCGVGILSTPYAV), 180–200 (WLGLIILFAFGILCFYTGLLL), 227–247 (ILVSVILYMELYAMSVEYIIL), 273–293 (LFALLTTLAVLPTVWLRDLSV), 297–317 (ISAGGVIASVLVVLCLFWVGL), 332–352 (LATLPVSVGLYGYCYSGHGVF), 367–387 (AVLLASFGICTLMYAGVAVMG), 412–432 (IALWTTVVNPFTKYALTLSPV), 452–474 (IAIRSALAISTLLVGLAIPFFGL), 478–500 (LIGSFLTMLITLILPPACFLSIL), and 511–531 (ICILIMTVGAVCSVIGTYSAL).

The protein belongs to the amino acid/polyamine transporter 2 family. Amino acid/auxin permease (AAAP) (TC 2.A.18.5) subfamily.

It is found in the membrane. The chain is Amino acid transporter AVT1B from Arabidopsis thaliana (Mouse-ear cress).